Consider the following 225-residue polypeptide: C-reactive protein (225 aa).

The signal sequence occupies residues 1–19 (MEKLLWCLLIMISFSRTFG). The Pentraxin (PTX) domain occupies 24–225 (FKKAFVFPKE…DVFIKPQLWS (202 aa)). Cys55 and Cys116 form a disulfide bridge. Residues Asn80, Glu157, Gln158, Asp159, and Gln169 each contribute to the Ca(2+) site.

It belongs to the pentraxin family. As to quaternary structure, homopentamer. Pentraxin (or pentaxin) have a discoid arrangement of 5 non-covalently bound subunits. Interacts with FCN1; may regulate monocyte activation by FCN1. Ca(2+) serves as cofactor. In terms of tissue distribution, found in plasma.

It localises to the secreted. Its function is as follows. Displays several functions associated with host defense: it promotes agglutination, bacterial capsular swelling, phagocytosis and complement fixation through its calcium-dependent binding to phosphorylcholine. Can interact with DNA and histones and may scavenge nuclear material released from damaged circulating cells. This Mus musculus (Mouse) protein is C-reactive protein (Crp).